Consider the following 467-residue polypeptide: 3-isopropylmalate dehydratase large subunit (467 aa).

The [4Fe-4S] cluster site is built by Cys347, Cys407, and Cys410. Over residues 422–442 the composition is skewed to polar residues; the sequence is QISASSSNRNFKGRQGSSSGR. A disordered region spans residues 422 to 443; the sequence is QISASSSNRNFKGRQGSSSGRT.

It belongs to the aconitase/IPM isomerase family. LeuC type 1 subfamily. As to quaternary structure, heterodimer of LeuC and LeuD. [4Fe-4S] cluster is required as a cofactor.

It carries out the reaction (2R,3S)-3-isopropylmalate = (2S)-2-isopropylmalate. It participates in amino-acid biosynthesis; L-leucine biosynthesis; L-leucine from 3-methyl-2-oxobutanoate: step 2/4. Functionally, catalyzes the isomerization between 2-isopropylmalate and 3-isopropylmalate, via the formation of 2-isopropylmaleate. In Nostoc punctiforme (strain ATCC 29133 / PCC 73102), this protein is 3-isopropylmalate dehydratase large subunit.